We begin with the raw amino-acid sequence, 291 residues long: Probable 2-(5''-triphosphoribosyl)-3'-dephosphocoenzyme-A synthase (291 aa).

It belongs to the CitG/MdcB family.

The catalysed reaction is 3'-dephospho-CoA + ATP = 2'-(5''-triphospho-alpha-D-ribosyl)-3'-dephospho-CoA + adenine. Its function is as follows. Involved in the formation of 2-(5''-phosphoribosyl)-3'-dephosphocoenzyme-A, the prosthetic group of the acyl-carrier protein of the malonate decarboxylase. The chain is Probable 2-(5''-triphosphoribosyl)-3'-dephosphocoenzyme-A synthase from Pseudomonas savastanoi pv. phaseolicola (strain 1448A / Race 6) (Pseudomonas syringae pv. phaseolicola (strain 1448A / Race 6)).